A 265-amino-acid polypeptide reads, in one-letter code: MGNFRPKKRFGQHLLISKGVIQKIVECLDIKEDDTVVEIGVGTGQLTEEILRRNPKIVYGIEIDKTVYPIIEERFKDFKNFVLIKEDFFDVDLRKLTDGKIKLTGNLPYNVASHILVNTAFYIDILQLAVFMIQKEVAQKLVGKPKTKDYTFMSVFLQTFFDIDYVMSVPARFFSPPPKVTSAVIRMIPKEKLPVSLDHMKKYKNFVSMLFSNRRKMLRSKIDKDILERAGIDPKARAEELSVDDFIRLFSEHLLYKHDGKNENS.

S-adenosyl-L-methionine contacts are provided by histidine 13, leucine 15, glycine 40, glutamate 62, aspartate 87, and asparagine 106.

Belongs to the class I-like SAM-binding methyltransferase superfamily. rRNA adenine N(6)-methyltransferase family. RsmA subfamily.

Its subcellular location is the cytoplasm. The catalysed reaction is adenosine(1518)/adenosine(1519) in 16S rRNA + 4 S-adenosyl-L-methionine = N(6)-dimethyladenosine(1518)/N(6)-dimethyladenosine(1519) in 16S rRNA + 4 S-adenosyl-L-homocysteine + 4 H(+). Functionally, specifically dimethylates two adjacent adenosines (A1518 and A1519) in the loop of a conserved hairpin near the 3'-end of 16S rRNA in the 30S particle. May play a critical role in biogenesis of 30S subunits. This is Ribosomal RNA small subunit methyltransferase A from Persephonella marina (strain DSM 14350 / EX-H1).